The chain runs to 325 residues: Tagatose 1,6-diphosphate aldolase 1 (325 aa).

This sequence belongs to the aldolase LacD family.

The enzyme catalyses D-tagatofuranose 1,6-bisphosphate = D-glyceraldehyde 3-phosphate + dihydroxyacetone phosphate. The protein operates within carbohydrate metabolism; D-tagatose 6-phosphate degradation; D-glyceraldehyde 3-phosphate and glycerone phosphate from D-tagatose 6-phosphate: step 2/2. This Streptococcus pyogenes serotype M3 (strain SSI-1) protein is Tagatose 1,6-diphosphate aldolase 1 (lacD1).